Here is a 643-residue protein sequence, read N- to C-terminus: 1-deoxy-D-xylulose-5-phosphate synthase (643 aa).

Thiamine diphosphate-binding positions include H78 and 119–121 (AHS). D150 serves as a coordination point for Mg(2+). Residues 151–152 (GA), N179, Y288, and E370 each bind thiamine diphosphate. N179 provides a ligand contact to Mg(2+).

It belongs to the transketolase family. DXPS subfamily. Homodimer. Mg(2+) serves as cofactor. The cofactor is thiamine diphosphate.

It catalyses the reaction D-glyceraldehyde 3-phosphate + pyruvate + H(+) = 1-deoxy-D-xylulose 5-phosphate + CO2. The protein operates within metabolic intermediate biosynthesis; 1-deoxy-D-xylulose 5-phosphate biosynthesis; 1-deoxy-D-xylulose 5-phosphate from D-glyceraldehyde 3-phosphate and pyruvate: step 1/1. Its function is as follows. Catalyzes the acyloin condensation reaction between C atoms 2 and 3 of pyruvate and glyceraldehyde 3-phosphate to yield 1-deoxy-D-xylulose-5-phosphate (DXP). The sequence is that of 1-deoxy-D-xylulose-5-phosphate synthase from Xanthobacter autotrophicus (strain ATCC BAA-1158 / Py2).